Reading from the N-terminus, the 593-residue chain is Regulatory protein NPR1 (593 aa).

Residues Ser-11, Ser-15, Ser-55, and Ser-59 each carry the phosphoserine modification. Residues 65 to 144 (SDAKLVLSDG…VYSSRVRPPP (80 aa)) form the BTB domain. A C2HC NPR-type zinc finger spans residues 147–161 (VSECADENCCHVACR). Zn(2+) is bound by residues Cys-150 and Cys-155. An S-nitrosocysteine modification is found at Cys-156. The Zn(2+) site is built by His-157 and Cys-160. 5 ANK repeats span residues 229–258 (KSNV…ELGL), 265–295 (KHVS…NLDD), 297–324 (CALH…DVNH), 328–357 (RGYT…SASE), and 361–397 (EGRT…CVEI). Positions 345-348 (ILSL) match the SIM3, required fo binding to SUMO3 and subsequent sumoylation motif. Residues 387 to 525 (HSLKGRLCVE…DQIMNCEDLT (139 aa)) form a salicylic acid-binding core (SBC) region. Arg-432 provides a ligand contact to salicylate. Residues 537 to 554 (KRLQKKQRYMEIQETLKK) carry the Nuclear localization signal motif. Residues 563-593 (LGNSSLTDSTSSTSKSTGGKRSNRKLSHRRR) form a disordered region. Residues 566–579 (SSLTDSTSSTSKST) show a composition bias toward low complexity. Residues 583–593 (RSNRKLSHRRR) are compositionally biased toward basic residues.

This sequence belongs to the plant 'ANKYRIN-BTB/POZ' family. 'NPR1-like' subfamily. As to quaternary structure, homodimer. Oligomer of dimers in an uninduced quiescent state; disulfide-linked. Forms activated (i.e. sumoylated) homodimers and monomers upon systemic acquired resistance (SAR) induction. Interacts with TGA1, TGA3, TGA4, TGA5, TGA6, TGA7 and with reduced forms of TGA1 and TGA4. Activated homodimer binds two TGA3 dimers in the presence of DNA via its ANK 2 repeat (265-295), thus forming a TGA3(2)-NPR1(2)-TGA3(2) complex in which NPR1 serves as a transcription cofactor by bridging two transcription factor complexes in an enhanceosome. Interacts with NIMIN-1 and NIMIN-3 via its C-terminal region, and with NIMIN-2 via its N-terminal region. Interacts with SUMO3 but not with SUMO1 and SUMO2; this interaction is required for phosphorylation at Ser-11 and Ser-15, and triggers activation by sumoylation and subsequent degradation. Binds to NPR3 and NPR4; these interactions are promoted by association of salicylic acid (SA) with NPR3, but disrupted by SA association with NPR4, probably due to conformational changes. Binds to CUL3A, a core component of the cullin-RING ubiquitin ligases (CRL); this interaction requires NPR3 and NPR4. Interacts with NPR2 independently of SA. Binds to WRKY70 when unmodified (i.e. not sumoylated). Post-translationally, phosphorylation at Ser-55 and Ser-59 prevents sumoylation to ensure stability and quiescence. Phosphorylated at Ser-11 and Ser-15 in the nucleus; facilitates its recruitment to a cullin3-based ubiquitin ligase leading to polyubiquitination and subsequent CUL3/CSN-mediated degradation. This phosphorylation at Ser-11 and Ser-15 requires interaction with SUMO3, and promotes in turn activation by sumoylation and subsequent degradation. In terms of processing, ubiquitinated. Post-translationally, sumoylated by SUMO3 independently of an E3 ligase to activate defense gene expression by switching from association with WRKY transcriptional repressors (e.g. WRKY70) to TGA transcriptional activators (e.g. TGA3). Sumoylation is inhibited by phosphorylation at Ser-55 and Ser-59, but seems to promote phosphorylation at Ser-11 and Ser-15. Sumoylation also triggers degradation, making immune induction transient. The Cys-82-SH group reacts with Cys-216-SH of the other subunit to form an intermolecular disulfide. This disulfide might subsequently be reduced upon systemic acquired resistance (SAR) induction. In terms of processing, S-nitrosylation at Cys-156 facilitates its oligomerization.

It is found in the cytoplasm. It localises to the nucleus. The protein localises to the nuclear body. The protein operates within protein modification; protein ubiquitination. Functionally, salicylic acid (SA)-binding substrate-specific adapter of an E3 ubiquitin-protein ligase complex (CUL3-RBX1-BTB) which mediates the ubiquitination and subsequent proteasomal degradation of target proteins. Transcription cofactor that represses gene expression in the absence of salicylic acid (SA), when attached to negative cis-elements (W-box) with WRKY transcription factors (e.g. WRKY70), but stimulates gene expression upon activation by SA, when sumoylated and attached to positive cis-elements (as-1) with TGA transcription factors (e.g. TGA3), thus confering immunity through a series of gene regulations ending in a significant increase in antimicrobial and defense genes expression (e.g. PR-1 and PR-2). Binds to SA with low capacity; this leads to conformational changes. Key positive regulator of the SA-dependent signaling pathway that negatively regulates jasmonic acid (JA)-dependent signaling pathway. Controls the onset of systemic acquired resistance (SAR). Upon SAR induction, a biphasic change in cellular reduction potential occurs, resulting in reduction of the cytoplasmic oligomeric form to dimeric and monomeric forms, which accumulate in the nucleus and activate gene expression. Appears to control lesion expansion by acting as an inhibitor of programmed cell death (PCD) during effector-triggered immunity (ETI) that occurs in response to incompatible interaction with avirulent pathogenic bacteria (i.e. Pseudomonas syringae ES4326/avrRpt2) ending in a hypersensitive response (HR). Phosphorylated form is target of proteasome degradation. In Arabidopsis thaliana (Mouse-ear cress), this protein is Regulatory protein NPR1.